Here is a 311-residue protein sequence, read N- to C-terminus: Quinolinate synthase (311 aa).

Histidine 25 and serine 42 together coordinate iminosuccinate. Cysteine 87 is a [4Fe-4S] cluster binding site. Iminosuccinate-binding positions include 113-115 (YIN) and serine 130. A [4Fe-4S] cluster-binding site is contributed by cysteine 175. Residues 201–203 (HPE) and threonine 218 contribute to the iminosuccinate site. Residue cysteine 268 coordinates [4Fe-4S] cluster.

This sequence belongs to the quinolinate synthase family. Type 2 subfamily. The cofactor is [4Fe-4S] cluster.

It is found in the cytoplasm. It catalyses the reaction iminosuccinate + dihydroxyacetone phosphate = quinolinate + phosphate + 2 H2O + H(+). It participates in cofactor biosynthesis; NAD(+) biosynthesis; quinolinate from iminoaspartate: step 1/1. In terms of biological role, catalyzes the condensation of iminoaspartate with dihydroxyacetone phosphate to form quinolinate. The sequence is that of Quinolinate synthase from Saccharolobus solfataricus (strain ATCC 35092 / DSM 1617 / JCM 11322 / P2) (Sulfolobus solfataricus).